A 583-amino-acid chain; its full sequence is Cationic amino acid transporter 6, chloroplastic (583 aa).

The N-terminal 50 residues, 1-50 (MEVQSSSNNGGHSSFSSLRVYLNSLSATPSRLSRRAISVSTSSDEMSRVR), are a transit peptide targeting the chloroplast. Helical transmembrane passes span 63-83 (WYDL…FVTT), 91-111 (AGPS…LSAF), 132-152 (ITFG…DYVM), 186-206 (GFNE…VIIC), 216-236 (NMIM…MGFI), 255-275 (FFPF…LSYI), 294-314 (IPVG…LMAV), 347-367 (VVGI…MLGQ), 397-417 (ASTF…LNVL), 418-438 (LNLV…ALIF), 450-470 (WPTL…TLIW), 481-501 (FMLG…QCVV), 509-529 (LWGV…NIFL), and 541-561 (FGFF…HASS).

The protein belongs to the amino acid-polyamine-organocation (APC) superfamily. Cationic amino acid transporter (CAT) (TC 2.A.3.3) family. As to expression, expressed in roots, stems, flowers, and leaves.

Its subcellular location is the plastid. The protein localises to the chloroplast membrane. Permease involved in the transport of the cationic neutral or acidic amino acids. This chain is Cationic amino acid transporter 6, chloroplastic (CAT6), found in Arabidopsis thaliana (Mouse-ear cress).